The chain runs to 429 residues: UDP-N-acetylglucosamine 1-carboxyvinyltransferase (429 aa).

22–23 (KN) is a binding site for phosphoenolpyruvate. Arg102 serves as a coordination point for UDP-N-acetyl-alpha-D-glucosamine. The Proton donor role is filled by Cys126. Cys126 carries the 2-(S-cysteinyl)pyruvic acid O-phosphothioketal modification. Residues 131–135 (RPVDL), Asp316, and Ile338 contribute to the UDP-N-acetyl-alpha-D-glucosamine site.

The protein belongs to the EPSP synthase family. MurA subfamily.

It localises to the cytoplasm. The catalysed reaction is phosphoenolpyruvate + UDP-N-acetyl-alpha-D-glucosamine = UDP-N-acetyl-3-O-(1-carboxyvinyl)-alpha-D-glucosamine + phosphate. It functions in the pathway cell wall biogenesis; peptidoglycan biosynthesis. In terms of biological role, cell wall formation. Adds enolpyruvyl to UDP-N-acetylglucosamine. This Rhodopseudomonas palustris (strain HaA2) protein is UDP-N-acetylglucosamine 1-carboxyvinyltransferase.